We begin with the raw amino-acid sequence, 81 residues long: Sulfur carrier protein TusA (81 aa).

C19 serves as the catalytic Cysteine persulfide intermediate.

This sequence belongs to the sulfur carrier protein TusA family.

It is found in the cytoplasm. Sulfur carrier protein which probably makes part of a sulfur-relay system. This is Sulfur carrier protein TusA from Vibrio vulnificus (strain CMCP6).